A 350-amino-acid chain; its full sequence is Decarboxylase iboD (350 aa).

The protein belongs to the phosphatidylserine decarboxylase family.

It functions in the pathway secondary metabolite biosynthesis. Functionally, decarboxylase; part of the gene cluster that mediates the biosynthesis of the psychoactive metabolites ibotenic acid and muscimol. The first committed step is glutamate hydroxylation by the 2-oxoglutarate-dependent dioxygenase iboH, and the last step is decarboxylation of ibotenic acid to muscimol by the decarboxylase iboD. The order of the intermediate reactions is somewhat ambiguous. IboA likely activates the carboxylic acid at position 5 to introduce an amide bond, and the flavin monooxygenase iboF generates the N-O bond. There are several options for the latter step. One option is that iboF directly hydroxylates the amide nitrogen formed by iboA to produce a hydroxamic acid species. Another option is that iboF hydroxylates an external N-containing compound, whose resulting N-O bond is subsequently introduced into the hydroxyglutamate scaffold. The paralogous PLP-dependent cystathionine gamma-synthase-like enzymes iboG1 and iboG2 are likely involved in substitution of the OH group at position 3 by the O-N moiety. The first cyclic intermediate is most probably tricholomic acid which is likely desaturated to ibotenic acid by the cytochrome P450 monooxygenase iboC. This chain is Decarboxylase iboD, found in Amanita muscaria (strain Koide BX008).